Reading from the N-terminus, the 120-residue chain is Synaptobrevin (120 aa).

The interval 1–38 (MSAPPSGPAPDAQGGAPGQPTGPPGAPPNTTSNRRLQQ) is disordered. At 1-98 (MSAPPSGPAP…KRKYWWKNCK (98 aa)) the chain is on the cytoplasmic side. The span at 29 to 38 (NTTSNRRLQQ) shows a compositional bias: polar residues. In terms of domain architecture, v-SNARE coiled-coil homology spans 35 to 95 (RLQQTQAQVE…AKLKRKYWWK (61 aa)). Residues 99–118 (MMIMLGGIGAIIVIVIIIYF) traverse the membrane as a helical; Anchor for type IV membrane protein segment. The Vesicular portion of the chain corresponds to 119–120 (FT).

The protein belongs to the synaptobrevin family. As to expression, nervous system specific.

It is found in the cytoplasmic vesicle. Its subcellular location is the secretory vesicle. The protein resides in the synaptic vesicle membrane. It localises to the synapse. The protein localises to the synaptosome. This protein may play a role in packaging, transport or release of neurotransmitters. This is Synaptobrevin from Tetronarce californica (Pacific electric ray).